Reading from the N-terminus, the 682-residue chain is Protein ACTIVITY OF BC1 COMPLEX KINASE 1, chloroplastic (682 aa).

A chloroplast-targeting transit peptide spans 1-79 (MESIHCNSLL…NSTDASVMTT (79 aa)). The Protein kinase domain maps to 236-567 (KISSQTIAAA…IQVLFKDGVF (332 aa)). ATP is bound by residues 242–250 (IAAASLGQV) and K265. The active-site Proton acceptor is the D400.

This sequence belongs to the protein kinase superfamily. ADCK protein kinase family. In terms of assembly, interacts with ABC1K3 in plastoglobules (PG). As to expression, expressed in all tissues (e.g. especially in leaves) at all developmental stages from seed germination to flowering, except in the root tips.

The protein localises to the plastid. Its subcellular location is the chloroplast. It is found in the plastoglobule. The catalysed reaction is L-seryl-[protein] + ATP = O-phospho-L-seryl-[protein] + ADP + H(+). It catalyses the reaction L-threonyl-[protein] + ATP = O-phospho-L-threonyl-[protein] + ADP + H(+). In terms of biological role, kinase that can phosphorylate the tocopherol cyclase VTE1, a key enzyme of tocopherol (vitamin E) metabolism and involved in the recycling of oxidated alpha-tocopherol quinone, possibly stabilizing it at plastoglobules. Also regulates plastoglobule protein composition. Prevents photodamage of chloroplasts under continuous red light, thus working in opposition to ABC1K3. Together with ABC1K1, contributes to plastoglobule (PG) function in prenyl-lipid metabolism, stress response, and thylakoid remodeling. Involved in chlorophyll degradation and in the maintenance of the number of chlorophyll-binding photosynthetic thylakoid membranes. Ensures photosynthetic electron transport by regulating the homeostasis of plastoquinone, beta-carotene and xanthophyll lutein, as well as membrane antioxidant tocopherol metabolism. Seems to affect specifically stability or turnover of D1 protein, product of psbA, one of the four core subunits of the photosystem II (PSII). Required for photooxidative stress responses, including the induction of oxidative stress response genes (e.g. FSD1, CSD1, CAT1, and UTG71C1), to prevent photosystem II core and chlorophyll degradations. The chain is Protein ACTIVITY OF BC1 COMPLEX KINASE 1, chloroplastic from Arabidopsis thaliana (Mouse-ear cress).